The following is a 670-amino-acid chain: Protein ACCELERATED CELL DEATH 6 (670 aa).

Topologically, residues M1 to T456 are cytoplasmic. The disordered stretch occupies residues L18 to K47. ANK repeat units follow at residues E66 to R95, T100 to F129, S134 to A163, D182 to F211, K216 to R248, Q260 to D290, D295 to V325, D329 to Y358, L363 to H391, and D399 to K428. A helical transmembrane segment spans residues L457–I477. Topologically, residues Q478–N492 are extracellular. Residues A493–P513 traverse the membrane as a helical segment. The Cytoplasmic segment spans residues G514–F537. A helical transmembrane segment spans residues I538–I558. Residues W559–P577 lie on the Extracellular side of the membrane. The helical transmembrane segment at L578–I598 threads the bilayer. The Cytoplasmic segment spans residues A599–K602. A helical membrane pass occupies residues W603–L623. At G624–S638 the chain is on the extracellular side. Residues G639–I659 form a helical membrane-spanning segment. Residues K660 to E670 lie on the Cytoplasmic side of the membrane.

As to quaternary structure, component of large complexes containing, at least, FLS2, HSP70 and ACD6 in endoplasmic reticulum, plasma membrane and soluble fraction. Associated with HSP70 proteins during endoplasmic reticulum-associated degradation (ERAD). Reduced complex levels upon benzothiazole (BTH) treatment. In terms of processing, ubiquitinated. In terms of tissue distribution, basal expression requires light and salicylic acid (SA).

It is found in the cell membrane. The protein resides in the endoplasmic reticulum membrane. Dose-dependent activator of the defense response against virulent pathogens, including bacteria, fungi and oomycetes, that acts in a positive feedback loop with the defense signal salicylic acid (SA). Regulates the salicylic acid (SA) signaling pathway leading to cell death and modulating cell fate (e.g. cell enlargement and/or cell division). In response to SA signaling, triggers the accumulation of FLS2 at the plasma membrane, thus priming defenses. Involved in SA-dependent freezing signaling and tolerance. The sequence is that of Protein ACCELERATED CELL DEATH 6 from Arabidopsis thaliana (Mouse-ear cress).